The following is a 177-amino-acid chain: Large ribosomal subunit protein uL10 (177 aa).

It belongs to the universal ribosomal protein uL10 family. Part of the ribosomal stalk of the 50S ribosomal subunit. The N-terminus interacts with L11 and the large rRNA to form the base of the stalk. The C-terminus forms an elongated spine to which L12 dimers bind in a sequential fashion forming a multimeric L10(L12)X complex.

Forms part of the ribosomal stalk, playing a central role in the interaction of the ribosome with GTP-bound translation factors. The chain is Large ribosomal subunit protein uL10 from Variovorax paradoxus (strain S110).